Consider the following 573-residue polypeptide: Poly(ribitol-phosphate) beta-N-acetylglucosaminyltransferase TarS (573 aa).

Residues Pro-9, Asp-41, Asn-68, Arg-76, 92 to 94 (DSD), Arg-127, and Glu-178 contribute to the UDP-N-acetyl-alpha-D-glucosamine site. Residue Asp-94 participates in Mn(2+) binding. The active-site Proton acceptor is the Asp-179. UDP-N-acetyl-alpha-D-glucosamine-binding positions include Arg-207 and 211-213 (HMS).

This sequence belongs to the glycosyltransferase 2 family. As to quaternary structure, homotrimer. The cofactor is Mn(2+).

It catalyses the reaction 4-O-[(D-ribitylphospho)(n)-di{(2R)-glycerylphospho}]-N-acetyl-beta-D-mannosaminyl-(1-&gt;4)-N-acetyl-alpha-D-glucosaminyl di-trans,octa-cis-undecaprenyl diphosphate + n UDP-N-acetyl-alpha-D-glucosamine = 4-O-([2-N-acetyl-beta-D-glucosaminyl-1-D-ribitylphospho](n)-di{[2R]-1-glycerylphospho})-N-acetyl-beta-D-mannosaminyl-(1-&gt;4)-N-acetyl-alpha-D-glucosaminyl di-trans,octa-cis-undecaprenyl diphosphate + n UDP + n H(+). It functions in the pathway cell wall biogenesis; poly(ribitol phosphate) teichoic acid biosynthesis. Functionally, attaches beta-O-GlcNAc (beta-O-N-acetyl-D-glucosamine) residues to the C4 position of poly(RboP)-wall teichoic acids (WTAs). Prefers UDP-GlcNAc as a donor substrate and is specific for poly(ribitol phosphate) WTAs. Can also use UDP-Glc and UDP-GalNAc, but not UDP-galactose or UDP-glucuronic acid. Mediates beta-lactam resistance in methicillin resistant Staphylococcus aureus (MRSA) strains. The polypeptide is Poly(ribitol-phosphate) beta-N-acetylglucosaminyltransferase TarS (Staphylococcus aureus (strain MW2)).